The primary structure comprises 95 residues: Aspartyl/glutamyl-tRNA(Asn/Gln) amidotransferase subunit C (95 aa).

It belongs to the GatC family. As to quaternary structure, heterotrimer of A, B and C subunits.

It carries out the reaction L-glutamyl-tRNA(Gln) + L-glutamine + ATP + H2O = L-glutaminyl-tRNA(Gln) + L-glutamate + ADP + phosphate + H(+). The enzyme catalyses L-aspartyl-tRNA(Asn) + L-glutamine + ATP + H2O = L-asparaginyl-tRNA(Asn) + L-glutamate + ADP + phosphate + 2 H(+). Functionally, allows the formation of correctly charged Asn-tRNA(Asn) or Gln-tRNA(Gln) through the transamidation of misacylated Asp-tRNA(Asn) or Glu-tRNA(Gln) in organisms which lack either or both of asparaginyl-tRNA or glutaminyl-tRNA synthetases. The reaction takes place in the presence of glutamine and ATP through an activated phospho-Asp-tRNA(Asn) or phospho-Glu-tRNA(Gln). This chain is Aspartyl/glutamyl-tRNA(Asn/Gln) amidotransferase subunit C, found in Chlorobium luteolum (strain DSM 273 / BCRC 81028 / 2530) (Pelodictyon luteolum).